An 854-amino-acid chain; its full sequence is Envelope glycoprotein gp160 (854 aa).

Residues 1 to 20 (MGRLLIKILIIAIGISIGIG) form the signal peptide. At 21-705 (NLYVTVFYGI…IILGLRFAWV (685 aa)) the chain is on the extracellular side. Residue asparagine 35 is glycosylated (N-linked (GlcNAc...) asparagine; by host). Cysteine 42 and cysteine 55 form a disulfide bridge. Residues asparagine 68, asparagine 115, asparagine 136, asparagine 153, asparagine 168, asparagine 182, and asparagine 199 are each glycosylated (N-linked (GlcNAc...) asparagine; by host). Disulfide bonds link cysteine 99/cysteine 207, cysteine 106/cysteine 198, cysteine 111/cysteine 154, cysteine 220/cysteine 250, and cysteine 230/cysteine 242. Positions 111 to 153 (CVELNGTATTKATTTATTTMTTPCQNCSTEQIEGEMAEEPASN) are V1. The V2 stretch occupies residues 154 to 198 (CTFAIAGYQRDVKKNYSMTWYDQELVCNNKTGSEKGSKDCYMIHC). 13 N-linked (GlcNAc...) asparagine; by host glycosylation sites follow: asparagine 244, asparagine 255, asparagine 265, asparagine 271, asparagine 283, asparagine 295, asparagine 305, asparagine 355, asparagine 400, asparagine 409, asparagine 458, asparagine 472, and asparagine 478. The interval 300 to 332 (CRRPGNKTVLPVTIMAGLVFHSQKYNTRLKQAW) is V3. The cysteines at positions 300 and 333 are disulfide-linked. Intrachain disulfides connect cysteine 382/cysteine 457 and cysteine 389/cysteine 430. The interval 389–430 (CKMDWFINYLNNRTEDAEGTNRTCDKGKPGPGPCVQRTYVAC) is V4. A V5 region spans residues 473-481 (KSGPINVTL). Residues 523 to 543 (VPFVLGFLGFLGAAGTAMGAA) are fusion peptide. Residues 586-602 (LNARVTALEKYLEDQAR) form an immunosuppression region. Asparagine 630 and asparagine 646 each carry an N-linked (GlcNAc...) asparagine; by host glycan. A coiled-coil region spans residues 633 to 672 (WLEWERQINALEGNITQLLEEAQNQESKNLDLYQKLDDWS). The MPER; binding to GalCer stretch occupies residues 667–688 (KLDDWSGFWSWFSLSTWLGYVK). A helical membrane pass occupies residues 706-726 (LWGCIRNIRQGYNPLPQIHIH). Residues 717 to 720 (YNPL) carry the YXXL motif; contains endocytosis signal motif. Over 727-854 (SSAERPDNGG…VRQGLEKVLG (128 aa)) the chain is Cytoplasmic.

As to quaternary structure, the mature envelope protein (Env) consists of a homotrimer of non-covalently associated gp120-gp41 heterodimers. The resulting complex protrudes from the virus surface as a spike. Interacts with host CD4 and CCR5. Gp120 also interacts with the C-type lectins CD209/DC-SIGN and CLEC4M/DC-SIGNR (collectively referred to as DC-SIGN(R)). In terms of assembly, the mature envelope protein (Env) consists of a homotrimer of non-covalently associated gp120-gp41 heterodimers. The resulting complex protrudes from the virus surface as a spike. In terms of processing, specific enzymatic cleavages in vivo yield mature proteins. Envelope glycoproteins are synthesized as an inactive precursor that is heavily N-glycosylated and processed likely by host cell furin in the Golgi to yield the mature SU and TM proteins. The cleavage site between SU and TM requires the minimal sequence [KR]-X-[KR]-R.

The protein resides in the virion membrane. Its subcellular location is the host cell membrane. The protein localises to the host endosome membrane. Its function is as follows. The surface protein gp120 (SU) attaches the virus to the host lymphoid cell by binding to the primary receptor CD4. This interaction induces a structural rearrangement creating a high affinity binding site for a chemokine coreceptor like CCR5. This peculiar 2 stage receptor-interaction strategy allows gp120 to maintain the highly conserved coreceptor-binding site in a cryptic conformation, protected from neutralizing antibodies. These changes are transmitted to the transmembrane protein gp41 and are thought to activate its fusogenic potential by unmasking its fusion peptide. In terms of biological role, surface protein gp120 (SU) may target the virus to gut-associated lymphoid tissue (GALT) by binding host ITGA4/ITGB7 (alpha-4/beta-7 integrins), a complex that mediates T-cell migration to the GALT. Interaction between gp120 and ITGA4/ITGB7 would allow the virus to enter GALT early in the infection, infecting and killing most of GALT's resting CD4+ T-cells. This T-cell depletion is believed to be the major insult to the host immune system leading to AIDS. Functionally, the surface protein gp120 is a ligand for CD209/DC-SIGN and CLEC4M/DC-SIGNR, which are respectively found on dendritic cells (DCs), and on endothelial cells of liver sinusoids and lymph node sinuses. These interactions allow capture of viral particles at mucosal surfaces by these cells and subsequent transmission to permissive cells. DCs are professional antigen presenting cells, critical for host immunity by inducing specific immune responses against a broad variety of pathogens. They act as sentinels in various tissues where they take up antigen, process it, and present it to T-cells following migration to lymphoid organs. SIV subverts the migration properties of dendritic cells to gain access to CD4+ T-cells in lymph nodes. Virus transmission to permissive T-cells occurs either in trans (without DCs infection, through viral capture and transmission), or in cis (following DCs productive infection, through the usual CD4-gp120 interaction), thereby inducing a robust infection. In trans infection, bound virions remain infectious over days and it is proposed that they are not degraded, but protected in non-lysosomal acidic organelles within the DCs close to the cell membrane thus contributing to the viral infectious potential during DCs' migration from the periphery to the lymphoid tissues. On arrival at lymphoid tissues, intact virions recycle back to DCs' cell surface allowing virus transmission to CD4+ T-cells. Virion capture also seems to lead to MHC-II-restricted viral antigen presentation, and probably to the activation of SIV-specific CD4+ cells. The transmembrane protein gp41 (TM) acts as a class I viral fusion protein. Under the current model, the protein has at least 3 conformational states: pre-fusion native state, pre-hairpin intermediate state, and post-fusion hairpin state. During fusion of viral and target intracellular membranes, the coiled coil regions (heptad repeats) assume a trimer-of-hairpins structure, positioning the fusion peptide in close proximity to the C-terminal region of the ectodomain. The formation of this structure appears to drive apposition and subsequent fusion of viral and target cell membranes. Complete fusion occurs in host cell endosomes. The virus undergoes clathrin-dependent internalization long before endosomal fusion, thus minimizing the surface exposure of conserved viral epitopes during fusion and reducing the efficacy of inhibitors targeting these epitopes. Membranes fusion leads to delivery of the nucleocapsid into the cytoplasm. Its function is as follows. The envelope glycoprotein gp160 precursor down-modulates cell surface CD4 antigen by interacting with it in the endoplasmic reticulum and blocking its transport to the cell surface. In terms of biological role, the gp120-gp41 heterodimer allows rapid transcytosis of the virus through CD4 negative cells such as simple epithelial monolayers of the intestinal, rectal and endocervical epithelial barriers. Both gp120 and gp41 specifically recognize glycosphingolipids galactosyl-ceramide (GalCer) or 3' sulfo-galactosyl-ceramide (GalS) present in the lipid rafts structures of epithelial cells. Binding to these alternative receptors allows the rapid transcytosis of the virus through the epithelial cells. This transcytotic vesicle-mediated transport of virions from the apical side to the basolateral side of the epithelial cells does not involve infection of the cells themselves. The protein is Envelope glycoprotein gp160 (env) of Cercopithecidae (Old World monkeys).